Consider the following 311-residue polypeptide: tRNA dimethylallyltransferase (311 aa).

9 to 16 is an ATP binding site; the sequence is GPTAVGKT. 11–16 contacts substrate; the sequence is TAVGKT. The interval 34–37 is interaction with substrate tRNA; sequence DSMQ.

Belongs to the IPP transferase family. As to quaternary structure, monomer. Requires Mg(2+) as cofactor.

It catalyses the reaction adenosine(37) in tRNA + dimethylallyl diphosphate = N(6)-dimethylallyladenosine(37) in tRNA + diphosphate. Its function is as follows. Catalyzes the transfer of a dimethylallyl group onto the adenine at position 37 in tRNAs that read codons beginning with uridine, leading to the formation of N6-(dimethylallyl)adenosine (i(6)A). This Clostridium botulinum (strain Langeland / NCTC 10281 / Type F) protein is tRNA dimethylallyltransferase.